The sequence spans 238 residues: ATP synthase subunit a (238 aa).

Transmembrane regions (helical) follow at residues 17-37 (LSNI…AIIC), 80-100 (ITLL…QIAI), 112-132 (DPIV…YYGI), and 194-214 (IFVG…SIFI).

It belongs to the ATPase A chain family. F-type ATPases have 2 components, CF(1) - the catalytic core - and CF(0) - the membrane proton channel. CF(1) has five subunits: alpha(3), beta(3), gamma(1), delta(1), epsilon(1). CF(0) has three main subunits: a(1), b(2) and c(9-12). The alpha and beta chains form an alternating ring which encloses part of the gamma chain. CF(1) is attached to CF(0) by a central stalk formed by the gamma and epsilon chains, while a peripheral stalk is formed by the delta and b chains.

It is found in the cell membrane. Functionally, key component of the proton channel; it plays a direct role in the translocation of protons across the membrane. This is ATP synthase subunit a from Listeria welshimeri serovar 6b (strain ATCC 35897 / DSM 20650 / CCUG 15529 / CIP 8149 / NCTC 11857 / SLCC 5334 / V8).